The sequence spans 274 residues: Malonyl-[acyl-carrier protein] O-methyltransferase (274 aa).

This sequence belongs to the methyltransferase superfamily.

The enzyme catalyses malonyl-[ACP] + S-adenosyl-L-methionine = malonyl-[ACP] methyl ester + S-adenosyl-L-homocysteine. Its pathway is cofactor biosynthesis; biotin biosynthesis. Converts the free carboxyl group of a malonyl-thioester to its methyl ester by transfer of a methyl group from S-adenosyl-L-methionine (SAM). It allows to synthesize pimeloyl-ACP via the fatty acid synthetic pathway. This chain is Malonyl-[acyl-carrier protein] O-methyltransferase, found in Priestia megaterium (strain DSM 319 / IMG 1521) (Bacillus megaterium).